We begin with the raw amino-acid sequence, 365 residues long: Guanine nucleotide-binding protein alpha-6 subunit (365 aa).

Residue glycine 2 is the site of N-myristoyl glycine attachment. One can recognise a G-alpha domain in the interval 42 to 364 (NRFKILLLGT…NENLRSAGLH (323 aa)). Residues 45–58 (KILLLGTAESGKST) are G1 motif. Residues 50–57 (GTAESGKS), 187–193 (VHCRIST), 212–216 (DVGGQ), 281–284 (NKYD), and alanine 336 each bind GTP. Residues serine 57 and threonine 193 each coordinate Mg(2+). The interval 185–193 (DIVHCRIST) is G2 motif. Positions 208–217 (FKMVDVGGQR) are G3 motif. A G4 motif region spans residues 277-284 (VLFLNKYD). Residues 334–339 (TTATDT) form a G5 motif region.

Belongs to the G-alpha family. As to quaternary structure, g proteins are composed of 3 units; alpha, beta and gamma. The alpha chain contains the guanine nucleotide binding site.

Functionally, guanine nucleotide-binding proteins (G proteins) are involved as modulators or transducers in various transmembrane signaling systems. This is Guanine nucleotide-binding protein alpha-6 subunit (gpa-6) from Caenorhabditis briggsae.